The chain runs to 227 residues: Biosynthetic peptidoglycan transglycosylase (227 aa).

A helical transmembrane segment spans residues 7–27; it reads VALLTLLLLVAAPYVLTLVYG.

The protein belongs to the glycosyltransferase 51 family.

It is found in the cell inner membrane. It catalyses the reaction [GlcNAc-(1-&gt;4)-Mur2Ac(oyl-L-Ala-gamma-D-Glu-L-Lys-D-Ala-D-Ala)](n)-di-trans,octa-cis-undecaprenyl diphosphate + beta-D-GlcNAc-(1-&gt;4)-Mur2Ac(oyl-L-Ala-gamma-D-Glu-L-Lys-D-Ala-D-Ala)-di-trans,octa-cis-undecaprenyl diphosphate = [GlcNAc-(1-&gt;4)-Mur2Ac(oyl-L-Ala-gamma-D-Glu-L-Lys-D-Ala-D-Ala)](n+1)-di-trans,octa-cis-undecaprenyl diphosphate + di-trans,octa-cis-undecaprenyl diphosphate + H(+). It functions in the pathway cell wall biogenesis; peptidoglycan biosynthesis. In terms of biological role, peptidoglycan polymerase that catalyzes glycan chain elongation from lipid-linked precursors. The chain is Biosynthetic peptidoglycan transglycosylase from Rhodopseudomonas palustris (strain HaA2).